The primary structure comprises 790 residues: von Willebrand factor A domain-containing protein 2 (790 aa).

A signal peptide spans 1 to 22 (MRLPWVNGILAFLSSQVLQCLC). The VWFA 1 domain occupies 50-221 (DILILLDGSN…DAVNGLATSL (172 aa)). The 38-residue stretch at 295–332 (PDPCDSQPCKNGGTCIAEGQDKYHCVCPAGFGGDTECA) folds into the EGF-like 1 domain. Intrachain disulfides connect C298–C309, C303–C319, and C321–C331. 2 VWFA domains span residues 342–518 (DLLF…QKRI) and 532–702 (DLAF…EDSV). The 36-residue stretch at 713 to 748 (PVNLCKPNPCMNDGVCILRQGSYRCDCRGWDGPHCE) folds into the EGF-like 2 domain. Intrachain disulfides connect C717-C728, C722-C737, and C739-C747. Residues 758-790 (WPQGLHSRSRQQRHSRKRRLKSVSGSRSSRKKP) form a disordered region. The segment covering 764–778 (SRSRQQRHSRKRRLK) has biased composition (basic residues).

As to quaternary structure, forms monomers and multimers.

The protein localises to the secreted. The protein is von Willebrand factor A domain-containing protein 2 (vwa2) of Xenopus laevis (African clawed frog).